The primary structure comprises 215 residues: Kinetochore protein Spc25 (215 aa).

Positions aspartate 43–alanine 114 form a coiled coil.

This sequence belongs to the SPC25 family. In terms of assembly, component of the Ndc80 complex, which is composed of Ndc80, Nuf2 and Spc25.

The protein resides in the nucleus. Its subcellular location is the chromosome. It localises to the centromere. It is found in the kinetochore. Functionally, acts as a component of the essential kinetochore-associated Ndc80 complex, which is required for chromosome segregation and spindle checkpoint activity during meiosis and mitosis. Required for kinetochore integrity and the organization of stable microtubule binding sites in the outer plate of the kinetochore. Participates in SAC signaling that responds specifically to disruptions in spindle microtubule dynamics. The NDC80 complex synergistically enhances the affinity of the SKA1 complex for microtubules and may allow the NDC80 complex to track depolymerizing microtubules. In Drosophila ananassae (Fruit fly), this protein is Kinetochore protein Spc25.